The following is a 237-amino-acid chain: MKKQAELYRGKAKTVYSTDNPDLLVLEFRNDTSAGDGARIEQFDRKGMVNNKFNHFIMSKLAEAGIPTQMEALLSDTECLVKKLDMVPVECVVRNRAAGSLVKRLGIEEGIELNPPLFDLFLKNDAMHDPMVNDSYCETFGWVSKENLARMRELTYKANDVLKKLFDDAGLILVDFKLEFGLFKGEVVLGDEFSPDGSRLWDKNTLDKMDKDRFRQSLGGLIEAYEEVAHRLGVKLD.

It belongs to the SAICAR synthetase family.

It carries out the reaction 5-amino-1-(5-phospho-D-ribosyl)imidazole-4-carboxylate + L-aspartate + ATP = (2S)-2-[5-amino-1-(5-phospho-beta-D-ribosyl)imidazole-4-carboxamido]succinate + ADP + phosphate + 2 H(+). It participates in purine metabolism; IMP biosynthesis via de novo pathway; 5-amino-1-(5-phospho-D-ribosyl)imidazole-4-carboxamide from 5-amino-1-(5-phospho-D-ribosyl)imidazole-4-carboxylate: step 1/2. This Klebsiella pneumoniae (strain 342) protein is Phosphoribosylaminoimidazole-succinocarboxamide synthase.